The primary structure comprises 284 residues: Acetyl-coenzyme A carboxylase carboxyl transferase subunit beta (284 aa).

Residues 24-284 (GLWYKSPTGK…LDLILNNEVR (261 aa)) form the CoA carboxyltransferase N-terminal domain.

It belongs to the AccD/PCCB family. Acetyl-CoA carboxylase is a heterohexamer composed of biotin carboxyl carrier protein (AccB), biotin carboxylase (AccC) and two subunits each of ACCase subunit alpha (AccA) and ACCase subunit beta (AccD).

Its subcellular location is the cytoplasm. The enzyme catalyses N(6)-carboxybiotinyl-L-lysyl-[protein] + acetyl-CoA = N(6)-biotinyl-L-lysyl-[protein] + malonyl-CoA. It functions in the pathway lipid metabolism; malonyl-CoA biosynthesis; malonyl-CoA from acetyl-CoA: step 1/1. Its function is as follows. Component of the acetyl coenzyme A carboxylase (ACC) complex. Biotin carboxylase (BC) catalyzes the carboxylation of biotin on its carrier protein (BCCP) and then the CO(2) group is transferred by the transcarboxylase to acetyl-CoA to form malonyl-CoA. The polypeptide is Acetyl-coenzyme A carboxylase carboxyl transferase subunit beta (Flavobacterium psychrophilum (strain ATCC 49511 / DSM 21280 / CIP 103535 / JIP02/86)).